A 184-amino-acid polypeptide reads, in one-letter code: Photosystem I assembly protein Ycf4 (184 aa).

A run of 2 helical transmembrane segments spans residues 22–42 and 57–77; these read FCWA…GISS and IIFF…LFIS.

The protein belongs to the Ycf4 family.

Its subcellular location is the plastid. The protein resides in the chloroplast thylakoid membrane. In terms of biological role, seems to be required for the assembly of the photosystem I complex. The chain is Photosystem I assembly protein Ycf4 from Populus alba (White poplar).